An 852-amino-acid chain; its full sequence is MPSIKKQENSNAGGWFSSWFFSNTANEDQDDMLPSTSAAAGETNYARNQQTLSSLRSQKSANKPTTAQNRNSAATLVRTDTESYLDAPKSSRDQANGVLRRKVTRRLQLTNNNLVIDCPIPDRLLGALTFNDHDEFSQLRYTAATCEPDEFESRGFTLRPKIYNRETELFIVMTMYNEDEILFTRTMHGVMKNIAHLCSLKKSTMWGPDGWKKVVVCIVADGRQVVNKKVLDVLASMGVYQAGIAKNVVDDKPVKAHIYEYTTQISIDSDMNIKGSDKGIVPVQIMFCLKEKNAKKINSHRWFFNAFGPIIKPNVCILLDVGTRPGNSSIYQLWKVFDRNPLIGGACGEIRAMLGTACCQLLNPLVAAQNFEYKMSNILDKPLESVFGYISVLPGAFSAYRYAALKNDVNGHGPLEKYFIGEDLHSNLQGSSQSIKNTGLFEANMYLAEDRILCFELVAKKDERWLLQYVGSAFGETDVPSQLPEFISQRRRWLNGSFFAGVYGLIHFRKIWNSGHGFNRTLLLMIEGIYNVISLVFSWFSVGNFYIAFYFITKSLSASNVDPFGNGWGSRIFDFCKYAYAFLLFVIFICSMGNRPQGSKFLFMACLVGFAIIMCYMLFCSSWLIYKGIQLAAEKYDWTYDTTTNFQIAMSDPGLRNMVISLSSTYGIYLVSSCLHRQPFHMMTSFLPYLLLLPGYINILNIYAFCNTHDVSWGTKGDNSVAKDLGVVKVSEKEKGVKTVEIELPADQHDINCQYDEALFALDEKPSKDTGSGGSLTKDDYYRSFRTHLVLAWIACNALLVVFITTSDYESIFNASVGTTYMSIMLWVNCGLGIFRFLGSIMFLLLGIFTSG.

2 disordered regions span residues 27–46 (EDQDDMLPSTSAAAGETNYA) and 53–97 (SSLR…QANG). Residues 53-74 (SSLRSQKSANKPTTAQNRNSAA) show a composition bias toward polar residues. 7 consecutive transmembrane segments (helical) span residues 492–509 (RWLNGSFFAGVYGLIHFR), 532–552 (VISLVFSWFSVGNFYIAFYFI), 572–592 (IFDFCKYAYAFLLFVIFICSM), 601–621 (FLFMACLVGFAIIMCYMLFCS), 686–706 (FLPYLLLLPGYINILNIYAFC), 787–807 (THLVLAWIACNALLVVFITTS), and 830–850 (CGLGIFRFLGSIMFLLLGIFT).

It belongs to the chitin synthase family. Class II subfamily.

The protein resides in the cell membrane. The enzyme catalyses [(1-&gt;4)-N-acetyl-beta-D-glucosaminyl](n) + UDP-N-acetyl-alpha-D-glucosamine = [(1-&gt;4)-N-acetyl-beta-D-glucosaminyl](n+1) + UDP + H(+). In terms of biological role, polymerizes chitin, a structural polymer of the cell wall and septum, by transferring the sugar moiety of UDP-GlcNAc to the non-reducing end of the growing chitin polymer. The protein is Chitin synthase 1 (CHS1) of Mucor circinelloides f. lusitanicus (Mucor racemosus var. lusitanicus).